A 492-amino-acid chain; its full sequence is Glutamyl-tRNA(Gln) amidotransferase subunit A (492 aa).

Active-site charge relay system residues include Lys-84 and Ser-159. Ser-183 functions as the Acyl-ester intermediate in the catalytic mechanism.

The protein belongs to the amidase family. GatA subfamily. As to quaternary structure, heterotrimer of A, B and C subunits.

It carries out the reaction L-glutamyl-tRNA(Gln) + L-glutamine + ATP + H2O = L-glutaminyl-tRNA(Gln) + L-glutamate + ADP + phosphate + H(+). Allows the formation of correctly charged Gln-tRNA(Gln) through the transamidation of misacylated Glu-tRNA(Gln) in organisms which lack glutaminyl-tRNA synthetase. The reaction takes place in the presence of glutamine and ATP through an activated gamma-phospho-Glu-tRNA(Gln). This Anaeromyxobacter sp. (strain K) protein is Glutamyl-tRNA(Gln) amidotransferase subunit A.